Reading from the N-terminus, the 276-residue chain is 4-deoxy-L-threo-5-hexosulose-uronate ketol-isomerase (276 aa).

Positions 194, 196, 201, and 243 each coordinate Zn(2+).

It belongs to the KduI family. The cofactor is Zn(2+).

The catalysed reaction is 5-dehydro-4-deoxy-D-glucuronate = 3-deoxy-D-glycero-2,5-hexodiulosonate. The protein operates within glycan metabolism; pectin degradation; 2-dehydro-3-deoxy-D-gluconate from pectin: step 4/5. Its function is as follows. Catalyzes the isomerization of 5-dehydro-4-deoxy-D-glucuronate to 3-deoxy-D-glycero-2,5-hexodiulosonate. This is 4-deoxy-L-threo-5-hexosulose-uronate ketol-isomerase from Caldicellulosiruptor bescii (strain ATCC BAA-1888 / DSM 6725 / KCTC 15123 / Z-1320) (Anaerocellum thermophilum).